The primary structure comprises 211 residues: MSAPKLALCVEDSGYEIAFAGRSNAGKSSAINALTNQKQLARASKKPGRTQMINFFSLGNPDQRLVDLPGYGYAAVPEDMKRVWQKELENYLIHRKSLQGLVLLMDIRHPLQHFDMMMLEWAYSRHLFVHILLTKADKLNRGPANKVLLEVKQQLKKMKLDFSIQLFSSLNKLGLEELASVMAGRLHFTLEQQPEFDVDAIPEASDEDAEE.

Residues 13–188 enclose the EngB-type G domain; the sequence is SGYEIAFAGR…ASVMAGRLHF (176 aa). Residues 21–28, 48–52, 67–70, 134–137, and 167–169 each bind GTP; these read GRSNAGKS, GRTQM, DLPG, TKAD, and FSS. The Mg(2+) site is built by S28 and T50.

The protein belongs to the TRAFAC class TrmE-Era-EngA-EngB-Septin-like GTPase superfamily. EngB GTPase family. It depends on Mg(2+) as a cofactor.

Necessary for normal cell division and for the maintenance of normal septation. The sequence is that of Probable GTP-binding protein EngB from Acinetobacter baumannii (strain ATCC 17978 / DSM 105126 / CIP 53.77 / LMG 1025 / NCDC KC755 / 5377).